Here is a 514-residue protein sequence, read N- to C-terminus: RNA-splicing ligase RtcB homolog (514 aa).

Residues Asp-128, Cys-131, His-236, His-268, and His-362 each coordinate Mn(2+). Asn-235–Glu-239 is a GMP binding site. GMP contacts are provided by residues His-362–Asn-363, Gly-411–Met-414, Ser-418, His-437–Gly-440, and Lys-513. The active-site GMP-histidine intermediate is His-437.

This sequence belongs to the RtcB family. In terms of assembly, catalytic component of the tRNA-splicing ligase complex. Mn(2+) serves as cofactor.

It catalyses the reaction a 3'-end 3'-phospho-ribonucleotide-RNA + a 5'-end dephospho-ribonucleoside-RNA + GTP = a ribonucleotidyl-ribonucleotide-RNA + GMP + diphosphate. It carries out the reaction a 3'-end 2',3'-cyclophospho-ribonucleotide-RNA + a 5'-end dephospho-ribonucleoside-RNA + GTP + H2O = a ribonucleotidyl-ribonucleotide-RNA + GMP + diphosphate + H(+). Functionally, catalytic subunit of the tRNA-splicing ligase complex that acts by directly joining spliced tRNA halves to mature-sized tRNAs by incorporating the precursor-derived splice junction phosphate into the mature tRNA as a canonical 3',5'-phosphodiester. May act as an RNA ligase with broad substrate specificity, and may function toward other RNAs. The sequence is that of RNA-splicing ligase RtcB homolog from Ostreococcus lucimarinus (strain CCE9901).